A 559-amino-acid polypeptide reads, in one-letter code: Putative protease Do-like 3, mitochondrial (559 aa).

Residues 1–48 (MSFLCVRTVSRFRSLSRALAPGFLLLHGNAVPKTAVFFRQQSSNTRLF) constitute a mitochondrion transit peptide. The interval 59–81 (ENNSKSALKNKLPPGKEVSSKDA) is disordered. Residues 100 to 292 (VFTVSSKPRL…FLNAIEESGE (193 aa)) are serine protease. Active-site charge relay system residues include His-138, Asp-169, and Ser-247. A PDZ domain is found at 300–380 (NLTYQKMDND…HLVSMKKPCE (81 aa)). Residues 538–559 (SEDLQPKQQNKRSKVPPKSKEH) form a disordered region. The segment covering 546–559 (QNKRSKVPPKSKEH) has biased composition (basic residues).

The protein belongs to the peptidase S1C family.

The protein resides in the mitochondrion matrix. In terms of biological role, putative serine protease. In Arabidopsis thaliana (Mouse-ear cress), this protein is Putative protease Do-like 3, mitochondrial (DEGP3).